The sequence spans 348 residues: Phosphoribosylformylglycinamidine cyclo-ligase (348 aa).

This sequence belongs to the AIR synthase family.

The protein localises to the cytoplasm. The enzyme catalyses 2-formamido-N(1)-(5-O-phospho-beta-D-ribosyl)acetamidine + ATP = 5-amino-1-(5-phospho-beta-D-ribosyl)imidazole + ADP + phosphate + H(+). It participates in purine metabolism; IMP biosynthesis via de novo pathway; 5-amino-1-(5-phospho-D-ribosyl)imidazole from N(2)-formyl-N(1)-(5-phospho-D-ribosyl)glycinamide: step 2/2. The sequence is that of Phosphoribosylformylglycinamidine cyclo-ligase from Geobacter metallireducens (strain ATCC 53774 / DSM 7210 / GS-15).